A 38-amino-acid polypeptide reads, in one-letter code: Photosystem II reaction center protein L (38 aa).

Residues 17-37 (SLYFGLLLIFVLAVLFSSYIF) form a helical membrane-spanning segment.

Belongs to the PsbL family. PSII is composed of 1 copy each of membrane proteins PsbA, PsbB, PsbC, PsbD, PsbE, PsbF, PsbH, PsbI, PsbJ, PsbK, PsbL, PsbM, PsbT, PsbX, PsbY, PsbZ, Psb30/Ycf12, at least 3 peripheral proteins of the oxygen-evolving complex and a large number of cofactors. It forms dimeric complexes.

It localises to the plastid. The protein localises to the chloroplast thylakoid membrane. In terms of biological role, one of the components of the core complex of photosystem II (PSII). PSII is a light-driven water:plastoquinone oxidoreductase that uses light energy to abstract electrons from H(2)O, generating O(2) and a proton gradient subsequently used for ATP formation. It consists of a core antenna complex that captures photons, and an electron transfer chain that converts photonic excitation into a charge separation. This subunit is found at the monomer-monomer interface and is required for correct PSII assembly and/or dimerization. In Chlamydomonas moewusii (Chlamydomonas eugametos), this protein is Photosystem II reaction center protein L.